A 266-amino-acid polypeptide reads, in one-letter code: UPF0328 protein ECU03_0130 (266 aa).

Belongs to the UPF0328 family.

The chain is UPF0328 protein ECU03_0130 from Encephalitozoon cuniculi (strain GB-M1) (Microsporidian parasite).